The sequence spans 373 residues: tRNA-specific 2-thiouridylase MnmA (373 aa).

ATP is bound by residues 12–19 (GMSGGVDS) and Met-38. The tract at residues 98 to 100 (NPD) is interaction with target base in tRNA. The active-site Nucleophile is Cys-103. Residues Cys-103 and Cys-200 are joined by a disulfide bond. An ATP-binding site is contributed by Gly-127. The interaction with tRNA stretch occupies residues 150 to 152 (KDQ). Residue Cys-200 is the Cysteine persulfide intermediate of the active site. The segment at 312-313 (RY) is interaction with tRNA.

It belongs to the MnmA/TRMU family.

Its subcellular location is the cytoplasm. It carries out the reaction S-sulfanyl-L-cysteinyl-[protein] + uridine(34) in tRNA + AH2 + ATP = 2-thiouridine(34) in tRNA + L-cysteinyl-[protein] + A + AMP + diphosphate + H(+). Functionally, catalyzes the 2-thiolation of uridine at the wobble position (U34) of tRNA, leading to the formation of s(2)U34. The sequence is that of tRNA-specific 2-thiouridylase MnmA from Streptococcus thermophilus (strain ATCC BAA-491 / LMD-9).